A 423-amino-acid polypeptide reads, in one-letter code: DUF21 domain-containing protein At2g14520 (423 aa).

Topologically, residues 1 to 11 (MAVEYECCGTS) are extracellular. In terms of domain architecture, CNNM transmembrane spans 8 to 191 (CGTSFFIHIA…GKGGELTHDE (184 aa)). A helical transmembrane segment spans residues 12–32 (FFIHIAVIVLLVLFAGLMSGL). Residues 33–70 (TLGLMSMSLVDLEVLAKSGTPRDRIHAAKILPVVKNQH) are Cytoplasmic-facing. Residues 71 to 91 (LLLCTLLICNAAAMEALPIFL) form a helical membrane-spanning segment. Topologically, residues 92 to 94 (DAL) are extracellular. Residues 95 to 115 (VTAWGAILISVTLILLFGEII) traverse the membrane as a helical segment. The Cytoplasmic segment spans residues 116 to 136 (PQSVCSRHGLAIGATVAPFVR). The helical transmembrane segment at 137 to 157 (VLVWICLPVAWPISKLLDFLL) threads the bilayer. Residues 158 to 423 (GHGRVALFRR…DETDHHFEDL (266 aa)) are Extracellular-facing. Residues 210–271 (MTPISDTFVI…TINPDEEIQV (62 aa)) form the CBS 1 domain. N-linked (GlcNAc...) asparagine glycans are attached at residues N273 and N322. CBS domains lie at 275-332 (TIRR…RVDV) and 356-415 (PNRA…IFDE).

The protein localises to the membrane. This Arabidopsis thaliana (Mouse-ear cress) protein is DUF21 domain-containing protein At2g14520 (CBSDUF3).